Reading from the N-terminus, the 331-residue chain is Olfactory receptor 6K3 (331 aa).

Residues 1–41 (MCWTMPSPFTGSSTRNMESGNQSTVTEFIFTGFPQLQDGSL) lie on the Extracellular side of the membrane. N-linked (GlcNAc...) asparagine glycosylation occurs at Asn-21. The chain crosses the membrane as a helical span at residues 42–62 (LYFFPLLFIYTFIIIDNLLIF). The Cytoplasmic segment spans residues 63 to 70 (SAVRLDTH). Residues 71-91 (LHNPMYNFISIFSFLEIWYTT) traverse the membrane as a helical segment. The Extracellular portion of the chain corresponds to 92–115 (ATIPKMLSNLISEKKAISMTGCIL). Cysteines 113 and 205 form a disulfide. The chain crosses the membrane as a helical span at residues 116-136 (QMYFFHSLENSEGILLTTMAI). Over 137-155 (DRYVAICNPLRYQMIMTPR) the chain is Cytoplasmic. Residues 156–176 (LCAQLSAGSCLFGFLILLPEI) traverse the membrane as a helical segment. At 177-212 (VMISTLPFCGPNQIHQIFCDLVPVLSLACTDTSMIL) the chain is on the extracellular side. A helical transmembrane segment spans residues 213 to 232 (IEDVIHAVTIIITFLIIALS). The Cytoplasmic portion of the chain corresponds to 233-252 (YVRIVTVILRIPSSEGRQKA). The helical transmembrane segment at 253-273 (FSTCAGHLMVFPIFFGSVSLM) threads the bilayer. Residues 274 to 286 (YLRFSDTYPPVLD) lie on the Extracellular side of the membrane. A helical membrane pass occupies residues 287–307 (TAIALMFTVLAPFFNPIIYSL). Residues 308 to 331 (RNKDMNNAIKKLFCLQKVLNKPGG) are Cytoplasmic-facing.

The protein belongs to the G-protein coupled receptor 1 family.

It localises to the cell membrane. Functionally, odorant receptor. The polypeptide is Olfactory receptor 6K3 (OR6K3) (Homo sapiens (Human)).